A 289-amino-acid polypeptide reads, in one-letter code: Pyridoxal kinase PdxY (289 aa).

Substrate-binding positions include serine 9 and 44-45; that span reads TQ. ATP-binding residues include aspartate 112, alanine 144, glutamate 149, and lysine 182. Aspartate 225 serves as a coordination point for substrate.

It belongs to the pyridoxine kinase family. PdxY subfamily. In terms of assembly, homodimer. Requires Mg(2+) as cofactor.

It catalyses the reaction pyridoxal + ATP = pyridoxal 5'-phosphate + ADP + H(+). It functions in the pathway cofactor metabolism; pyridoxal 5'-phosphate salvage; pyridoxal 5'-phosphate from pyridoxal: step 1/1. Functionally, pyridoxal kinase involved in the salvage pathway of pyridoxal 5'-phosphate (PLP). Catalyzes the phosphorylation of pyridoxal to PLP. This Aliivibrio fischeri (strain ATCC 700601 / ES114) (Vibrio fischeri) protein is Pyridoxal kinase PdxY.